A 588-amino-acid chain; its full sequence is Arylsulfatase L (588 aa).

The first 31 residues, 1 to 31 (MLHLHHSWLCFRSWLAGMLSVLLGLVPSASS), serve as a signal peptide directing secretion. Asn-32 carries N-linked (GlcNAc...) asparagine glycosylation. Residues Asp-46 and Asp-47 each contribute to the Ca(2+) site. Asn-58 is a glycosylation site (N-linked (GlcNAc...) asparagine). Position 86 (Cys-86) interacts with Ca(2+). Cys-86 (nucleophile) is an active-site residue. Cys-86 carries the 3-oxoalanine (Cys) modification. Asn-125 carries N-linked (GlcNAc...) asparagine glycosylation. A substrate-binding site is contributed by Lys-145. Residue His-147 is part of the active site. N-linked (GlcNAc...) asparagine glycosylation is present at Asn-258. His-301 contacts substrate. Asn-344 is a glycosylation site (N-linked (GlcNAc...) asparagine). 2 residues coordinate Ca(2+): Asp-353 and His-354. Position 378 (Lys-378) interacts with substrate.

Belongs to the sulfatase family. The cofactor is Ca(2+). The conversion to 3-oxoalanine (also known as C-formylglycine, FGly), of a serine or cysteine residue in prokaryotes and of a cysteine residue in eukaryotes, is critical for catalytic activity.

It localises to the golgi apparatus. The protein resides in the golgi stack. The enzyme catalyses an aryl sulfate + H2O = a phenol + sulfate + H(+). Exhibits arylsulfatase activity towards the artificial substrate 4-methylumbelliferyl sulfate. May be essential for the correct composition of cartilage and bone matrix during development. Has no activity toward steroid sulfates. This chain is Arylsulfatase L (ARSL), found in Macaca fascicularis (Crab-eating macaque).